The sequence spans 513 residues: Calcium-dependent protein kinase 2 (513 aa).

A Protein kinase domain is found at 65 to 323 (YSFGKELGRG…SAQVLQHQWL (259 aa)). ATP is bound by residues 71-79 (LGRGQFGVT) and lysine 94. Residue aspartate 189 is the Proton acceptor of the active site. The autoinhibitory domain stretch occupies residues 329 to 359 (ASDKPIDSAVLSRMKQFRAMNKLKKMALKVI). 4 EF-hand domains span residues 366-401 (EEIK…LGSK), 402-437 (LSEA…RHKL), 438-473 (ERDE…HEMG), and 478-508 (IREI…GMQQ). 19 residues coordinate Ca(2+): aspartate 379, aspartate 381, serine 383, threonine 385, glutamate 390, aspartate 415, aspartate 417, asparagine 419, serine 421, glutamate 426, aspartate 451, aspartate 453, serine 455, glutamate 462, aspartate 486, aspartate 488, aspartate 490, arginine 492, and glutamate 497.

The protein belongs to the protein kinase superfamily. Ser/Thr protein kinase family. CDPK subfamily.

It catalyses the reaction L-seryl-[protein] + ATP = O-phospho-L-seryl-[protein] + ADP + H(+). The enzyme catalyses L-threonyl-[protein] + ATP = O-phospho-L-threonyl-[protein] + ADP + H(+). Activated by calcium. Autophosphorylation may play an important role in the regulation of the kinase activity. Its function is as follows. May play a role in signal transduction pathways that involve calcium as a second messenger. This is Calcium-dependent protein kinase 2 (CPK2) from Zea mays (Maize).